The primary structure comprises 336 residues: Succinylglutamate desuccinylase (336 aa).

Positions 59, 62, and 151 each coordinate Zn(2+). Glu-215 is a catalytic residue.

Belongs to the AspA/AstE family. Succinylglutamate desuccinylase subfamily. It depends on Zn(2+) as a cofactor.

It catalyses the reaction N-succinyl-L-glutamate + H2O = L-glutamate + succinate. It participates in amino-acid degradation; L-arginine degradation via AST pathway; L-glutamate and succinate from L-arginine: step 5/5. Its function is as follows. Transforms N(2)-succinylglutamate into succinate and glutamate. The sequence is that of Succinylglutamate desuccinylase from Pseudomonas fluorescens (strain ATCC BAA-477 / NRRL B-23932 / Pf-5).